A 190-amino-acid polypeptide reads, in one-letter code: Peptidyl-tRNA hydrolase (190 aa).

Position 14 (F14) interacts with tRNA. Catalysis depends on H19, which acts as the Proton acceptor. 3 residues coordinate tRNA: M64, N66, and N112.

This sequence belongs to the PTH family. Monomer.

It is found in the cytoplasm. It carries out the reaction an N-acyl-L-alpha-aminoacyl-tRNA + H2O = an N-acyl-L-amino acid + a tRNA + H(+). Functionally, hydrolyzes ribosome-free peptidyl-tRNAs (with 1 or more amino acids incorporated), which drop off the ribosome during protein synthesis, or as a result of ribosome stalling. Catalyzes the release of premature peptidyl moieties from peptidyl-tRNA molecules trapped in stalled 50S ribosomal subunits, and thus maintains levels of free tRNAs and 50S ribosomes. This Staphylococcus saprophyticus subsp. saprophyticus (strain ATCC 15305 / DSM 20229 / NCIMB 8711 / NCTC 7292 / S-41) protein is Peptidyl-tRNA hydrolase.